Consider the following 520-residue polypeptide: Hydroxymethylglutaryl-CoA synthase, cytoplasmic (520 aa).

A Phosphoserine modification is found at Ser4. (3S)-3-hydroxy-3-methylglutaryl-CoA is bound by residues Asp43 and Ala44. 44–46 contacts CoA; that stretch reads AGK. An N6-acetyllysine modification is found at Lys46. Glu95 serves as the catalytic Proton donor/acceptor. Residues Cys129, Asn167, Thr171, Ser221, and His264 each coordinate (3S)-3-hydroxy-3-methylglutaryl-CoA. Residue Cys129 is the Acyl-thioester intermediate of the active site. Position 167 (Asn167) interacts with CoA. Ser221 lines the CoA pocket. The active-site Proton donor/acceptor is His264. CoA is bound by residues Lys269 and Lys273. Residues Lys273, Asn343, and Ser377 each coordinate (3S)-3-hydroxy-3-methylglutaryl-CoA. Position 273 is an N6-acetyllysine (Lys273). The disordered stretch occupies residues 488-520; it reads TATEHIPSPAKKVPRLPATSAESESAVISNGEH. Residues Ser495 and Ser516 each carry the phosphoserine modification. Positions 507–520 are enriched in polar residues; that stretch reads SAESESAVISNGEH.

This sequence belongs to the thiolase-like superfamily. HMG-CoA synthase family. As to quaternary structure, homodimer.

Its subcellular location is the cytoplasm. It catalyses the reaction acetoacetyl-CoA + acetyl-CoA + H2O = (3S)-3-hydroxy-3-methylglutaryl-CoA + CoA + H(+). It participates in metabolic intermediate biosynthesis; (R)-mevalonate biosynthesis; (R)-mevalonate from acetyl-CoA: step 2/3. In terms of biological role, catalyzes the condensation of acetyl-CoA with acetoacetyl-CoA to form HMG-CoA, which is converted by HMG-CoA reductase (HMGCR) into mevalonate, a precursor for cholesterol synthesis. This Mus musculus (Mouse) protein is Hydroxymethylglutaryl-CoA synthase, cytoplasmic.